The chain runs to 434 residues: CinA-like protein (434 aa).

Belongs to the CinA family.

The polypeptide is CinA-like protein (Mycolicibacterium paratuberculosis (strain ATCC BAA-968 / K-10) (Mycobacterium paratuberculosis)).